A 754-amino-acid chain; its full sequence is Probable beta-glucosidase D (754 aa).

Positions 1 to 20 (MKVLSFIVAAALLGLTGASS) are cleaved as a signal peptide. N-linked (GlcNAc...) asparagine glycans are attached at residues Asn66, Asn69, and Asn186. The segment at 186–206 (NRTGGGGGGGGDSGSAPYSSN) is disordered. Over residues 188–198 (TGGGGGGGGDS) the composition is skewed to gly residues. Asn239 carries an N-linked (GlcNAc...) asparagine glycan. Asp267 is a catalytic residue. Residues Asn301, Asn345, Asn443, Asn512, Asn534, Asn573, Asn588, Asn655, and Asn745 are each glycosylated (N-linked (GlcNAc...) asparagine).

The protein belongs to the glycosyl hydrolase 3 family.

It is found in the secreted. The enzyme catalyses Hydrolysis of terminal, non-reducing beta-D-glucosyl residues with release of beta-D-glucose.. The protein operates within glycan metabolism; cellulose degradation. Its function is as follows. Beta-glucosidases are one of a number of cellulolytic enzymes involved in the degradation of cellulosic biomass. Catalyzes the last step releasing glucose from the inhibitory cellobiose. This chain is Probable beta-glucosidase D (bglD), found in Aspergillus niger (strain ATCC MYA-4892 / CBS 513.88 / FGSC A1513).